The sequence spans 255 residues: Putative esterase YitV (255 aa).

This is Putative esterase YitV (yitV) from Bacillus subtilis (strain 168).